Consider the following 619-residue polypeptide: ATP-dependent zinc metalloprotease FtsH 1 (619 aa).

Residues 1 to 8 are Cytoplasmic-facing; that stretch reads MADEKRPA. A helical transmembrane segment spans residues 9–29; the sequence is SRAWLGYLLIAVGILVLSGIV. Topologically, residues 30–108 are periplasmic; the sequence is RSRGRPLVPY…RIEAKSPQTS (79 aa). Residues 109-129 traverse the membrane as a helical segment; that stretch reads VWMQVAIWMLPLVLINAAFFM. The Cytoplasmic portion of the chain corresponds to 130–619; sequence MLRRAGQGAG…KIAVGPPSAA (490 aa). Residue 203-210 participates in ATP binding; the sequence is GPPGTGKT. Zn(2+) is bound at residue H426. Residue E427 is part of the active site. 2 residues coordinate Zn(2+): H430 and D503.

The protein in the central section; belongs to the AAA ATPase family. It in the C-terminal section; belongs to the peptidase M41 family. As to quaternary structure, homohexamer. Requires Zn(2+) as cofactor.

The protein resides in the cell inner membrane. Functionally, acts as a processive, ATP-dependent zinc metallopeptidase for both cytoplasmic and membrane proteins. Plays a role in the quality control of integral membrane proteins. In Sorangium cellulosum (strain So ce56) (Polyangium cellulosum (strain So ce56)), this protein is ATP-dependent zinc metalloprotease FtsH 1.